The following is an 89-amino-acid chain: Small ribosomal subunit protein uS15 (89 aa).

This sequence belongs to the universal ribosomal protein uS15 family. As to quaternary structure, part of the 30S ribosomal subunit. Forms a bridge to the 50S subunit in the 70S ribosome, contacting the 23S rRNA.

One of the primary rRNA binding proteins, it binds directly to 16S rRNA where it helps nucleate assembly of the platform of the 30S subunit by binding and bridging several RNA helices of the 16S rRNA. Its function is as follows. Forms an intersubunit bridge (bridge B4) with the 23S rRNA of the 50S subunit in the ribosome. This chain is Small ribosomal subunit protein uS15, found in Parafrankia sp. (strain EAN1pec).